Consider the following 231-residue polypeptide: Verlamelin biosynthesis protein B (231 aa).

The protein operates within secondary metabolite biosynthesis. Its function is as follows. Part of the gene cluster that mediates the biosynthesis of verlamelin, a lipopeptide that exhibits antifungal activity against plant pathogenic fungi. Verlamelin is a cyclic hexadepsipeptide and is bridged by ester bonding between a 5-hydroxytetradecanoic acid moiety and a carboxyl group on the terminal Val of amide-bonded tetradecanoyl-hexapeptide D-allo-Thr-D-Ala-L-Pro-L-Gln-D-Tyr-L-Val. VlmA and vlmB are altogether regarded as essential components in the biosynthesis of 5-hydroxytetradecanoic acid. VlmA catalyzes the hydroxylation at position C5 of tetradecanoic acid produced in primary metabolism, while the precise function of vlmB still remains to be solved. To be loaded onto the waiting NRPS, 5-hydroxytetradecanoic acid is activated in the form of acyladenylate by the AMP-dependent ligase vlmC. VlmS seems to accept the fatty-acyl intermediate onto the initial module to further elongate amino acid residues by the downstream modules. In addition, in the last module at its C-terminus, vlmS contains a surplus condensation (C) domain that may be involved in cyclization, the last step to form verlamelin. The protein is Verlamelin biosynthesis protein B of Lecanicillium sp.